We begin with the raw amino-acid sequence, 504 residues long: MEEYQGYLELDRFRQHDFLYPLIFREYSYALAHGHGLNRYMLLENIGYDNKSSLLIVKRLITTMYQQNYLIISANDSKQNPFFGYNKNLHSKILSEGFAIIVEIPFYLRLISSLEGAEIVRFYNLRSIHSIFPFLEEKFPHLNYSADILIPYPAHLEILVQTLRYRVKDASYLHLLRFFLHEYSNCNSLIITNKSLSIFSKSNPRFFLFLYNSYICEYESIFLFLRNQSSHLRLTSSGILFERLCLYRKIEHFAEVFANDFTGIPCFLKDPFMHYVRYQGKSILASKDTPLLMNKCKSYLVNLWQCHFDVWSHAASIRINQLSKHSLDFLSYLSSVRRNPAVVRNQMLENSFLLNNAPNKLDTIVPIIPLIGSLAKAKFCNAVGHPISKLTRADLSDFEIINRFLHICRNLSHYYSGSSKKKNMYRIKYILRLSCVKTLARKHKSTARAFLKRVDSEFFQEFFTEEGGFISLIFPRASFALRRLYSGRVWYLDIIFINGLSNHE.

The protein belongs to the intron maturase 2 family. MatK subfamily.

The protein localises to the plastid. Its subcellular location is the chloroplast. In terms of biological role, usually encoded in the trnK tRNA gene intron. Probably assists in splicing its own and other chloroplast group II introns. The polypeptide is Maturase K (Quercus coccifera (Kermes oak)).